A 94-amino-acid polypeptide reads, in one-letter code: Pyrimidine/purine nucleoside phosphorylase (94 aa).

The protein belongs to the nucleoside phosphorylase PpnP family.

The enzyme catalyses a purine D-ribonucleoside + phosphate = a purine nucleobase + alpha-D-ribose 1-phosphate. It carries out the reaction adenosine + phosphate = alpha-D-ribose 1-phosphate + adenine. It catalyses the reaction cytidine + phosphate = cytosine + alpha-D-ribose 1-phosphate. The catalysed reaction is guanosine + phosphate = alpha-D-ribose 1-phosphate + guanine. The enzyme catalyses inosine + phosphate = alpha-D-ribose 1-phosphate + hypoxanthine. It carries out the reaction thymidine + phosphate = 2-deoxy-alpha-D-ribose 1-phosphate + thymine. It catalyses the reaction uridine + phosphate = alpha-D-ribose 1-phosphate + uracil. The catalysed reaction is xanthosine + phosphate = alpha-D-ribose 1-phosphate + xanthine. Its function is as follows. Catalyzes the phosphorolysis of diverse nucleosides, yielding D-ribose 1-phosphate and the respective free bases. Can use uridine, adenosine, guanosine, cytidine, thymidine, inosine and xanthosine as substrates. Also catalyzes the reverse reactions. The protein is Pyrimidine/purine nucleoside phosphorylase of Pseudomonas fluorescens (strain ATCC BAA-477 / NRRL B-23932 / Pf-5).